Here is a 131-residue protein sequence, read N- to C-terminus: Profilin (131 aa).

This sequence belongs to the profilin family. Occurs in many kinds of cells as a complex with monomeric actin in a 1:1 ratio.

It localises to the cytoplasm. It is found in the cytoskeleton. In terms of biological role, binds to actin and affects the structure of the cytoskeleton. At high concentrations, profilin prevents the polymerization of actin, whereas it enhances it at low concentrations. By binding to PIP2, it inhibits the formation of IP3 and DG. This is Profilin from Pyrus communis (Pear).